A 209-amino-acid chain; its full sequence is Small ribosomal subunit protein uS4 (209 aa).

The S4 RNA-binding domain occupies 98–158; sequence SRVDNIVYRL…EKSRSLAAIK (61 aa).

It belongs to the universal ribosomal protein uS4 family. Part of the 30S ribosomal subunit. Contacts protein S5. The interaction surface between S4 and S5 is involved in control of translational fidelity.

Its function is as follows. One of the primary rRNA binding proteins, it binds directly to 16S rRNA where it nucleates assembly of the body of the 30S subunit. With S5 and S12 plays an important role in translational accuracy. The protein is Small ribosomal subunit protein uS4 of Pseudothermotoga lettingae (strain ATCC BAA-301 / DSM 14385 / NBRC 107922 / TMO) (Thermotoga lettingae).